Reading from the N-terminus, the 390-residue chain is Dual-specificity RNA methyltransferase RlmN (390 aa).

Catalysis depends on Glu126, which acts as the Proton acceptor. The 241-residue stretch at 134–374 (TEDRGAVCLS…APVRTPRGQD (241 aa)) folds into the Radical SAM core domain. A disulfide bond links Cys141 and Cys379. [4Fe-4S] cluster-binding residues include Cys148, Cys152, and Cys155. S-adenosyl-L-methionine contacts are provided by residues 205–206 (GE), Ser237, 259–261 (SLH), and Asn336. Cys379 functions as the S-methylcysteine intermediate in the catalytic mechanism.

It belongs to the radical SAM superfamily. RlmN family. [4Fe-4S] cluster is required as a cofactor.

The protein localises to the cytoplasm. The catalysed reaction is adenosine(2503) in 23S rRNA + 2 reduced [2Fe-2S]-[ferredoxin] + 2 S-adenosyl-L-methionine = 2-methyladenosine(2503) in 23S rRNA + 5'-deoxyadenosine + L-methionine + 2 oxidized [2Fe-2S]-[ferredoxin] + S-adenosyl-L-homocysteine. It carries out the reaction adenosine(37) in tRNA + 2 reduced [2Fe-2S]-[ferredoxin] + 2 S-adenosyl-L-methionine = 2-methyladenosine(37) in tRNA + 5'-deoxyadenosine + L-methionine + 2 oxidized [2Fe-2S]-[ferredoxin] + S-adenosyl-L-homocysteine. Its function is as follows. Specifically methylates position 2 of adenine 2503 in 23S rRNA and position 2 of adenine 37 in tRNAs. m2A2503 modification seems to play a crucial role in the proofreading step occurring at the peptidyl transferase center and thus would serve to optimize ribosomal fidelity. In Acidiphilium cryptum (strain JF-5), this protein is Dual-specificity RNA methyltransferase RlmN.